The primary structure comprises 463 residues: Probable Xaa-Pro aminopeptidase pepP (463 aa).

Residues aspartate 259, aspartate 270, glutamate 393, and glutamate 433 each coordinate Mn(2+).

This sequence belongs to the peptidase M24B family. Mn(2+) serves as cofactor.

It carries out the reaction Release of any N-terminal amino acid, including proline, that is linked to proline, even from a dipeptide or tripeptide.. Functionally, catalyzes the removal of a penultimate prolyl residue from the N-termini of peptides. The chain is Probable Xaa-Pro aminopeptidase pepP (pepP) from Pyrenophora teres f. teres (strain 0-1) (Barley net blotch fungus).